The primary structure comprises 302 residues: Myeloid-associated differentiation marker-like protein 2 (302 aa).

2 consecutive MARVEL domains span residues 13-149 and 154-298; these read AIWS…AKPG and YMAT…RLRI. A run of 7 helical transmembrane segments spans residues 45-65, 87-107, 124-144, 158-178, 191-211, 225-245, and 273-293; these read AYGT…ILIV, AYAM…PMYF, LAVS…VFLT, ASGL…GALA, WCVA…ILNI, FVVI…VIWP, and LAVT…LIYT.

This sequence belongs to the MAL family.

Its subcellular location is the membrane. In Xenopus laevis (African clawed frog), this protein is Myeloid-associated differentiation marker-like protein 2 (myadml2).